We begin with the raw amino-acid sequence, 590 residues long: Peroxisomal targeting signal receptor (590 aa).

A Glycyl cysteine thioester (Cys-Gly) (interchain with G-Cter in ubiquitin) cross-link involves residue cysteine 6. The interval 7 to 29 is amphipathic helix 1 (AH1); the sequence is SVGSNPLAQLNKHAQGQGSSLSN. Lysine 18 participates in a covalent cross-link: Glycyl lysine isopeptide (Lys-Gly) (interchain with G-Cter in ubiquitin). A compositionally biased stretch (polar residues) spans 18–30; that stretch reads KHAQGQGSSLSNT. Residues 18 to 45 are disordered; the sequence is KHAQGQGSSLSNTHVRHSGGVSGSNVFR. Residues 56–74 form an amphipathic helix 2 (AH2) region; it reads RQQLNSFMSQPMRLGEDKM. Short sequence motifs (wxxxF/Y motif) lie at residues 108-112, 139-143, and 178-182; these read WTREF, WKFRY, and WNDKF. An amphipathic helix 4 (AH4) region spans residues 227 to 243; it reads FQEVWDSIQQDTEEMLS. TPR repeat units follow at residues 285-319, 320-353, 424-457, 459-491, and 493-525; these read NPNA…DPKH, VDAW…DPNN, PDIQ…NPND, LMWN…KPSF, and RARY…HDVE.

It belongs to the peroxisomal targeting signal receptor family. As to quaternary structure, interacts (via WxxxF/Y and LVxEF motifs) with PEX14; promoting translocation through the PEX13-PEX14 docking complex. Post-translationally, monoubiquitinated at Cys-6 by PEX2 during PEX5 passage through the retrotranslocation channel: monoubiquitination acts as a signal for PEX5 extraction and is required for proper export from peroxisomes and recycling. When PEX5 recycling is compromised, polyubiquitinated at Lys-18 by PEX10 during its passage through the retrotranslocation channel, leading to its degradation.

Its subcellular location is the cytoplasm. It localises to the cytosol. The protein resides in the peroxisome matrix. Receptor that mediates peroxisomal import of proteins containing a C-terminal PTS1-type tripeptide peroxisomal targeting signal (SKL-type). Binds to cargo proteins containing a PTS1 peroxisomal targeting signal in the cytosol, and translocates them into the peroxisome matrix by passing through the PEX13-PEX14 docking complex along with cargo proteins. PEX5 receptor is then retrotranslocated into the cytosol, leading to release of bound cargo in the peroxisome matrix, and reset for a subsequent peroxisome import cycle. This is Peroxisomal targeting signal receptor (PEX5) from Candida glabrata (strain ATCC 2001 / BCRC 20586 / JCM 3761 / NBRC 0622 / NRRL Y-65 / CBS 138) (Yeast).